A 691-amino-acid polypeptide reads, in one-letter code: Elongation factor G (691 aa).

The tr-type G domain maps to 8–282 (ERVRNIGIAA…AVVDYLPAPI (275 aa)). GTP-binding positions include 17 to 24 (AHIDAGKT), 81 to 85 (DTPGH), and 135 to 138 (NKMD).

This sequence belongs to the TRAFAC class translation factor GTPase superfamily. Classic translation factor GTPase family. EF-G/EF-2 subfamily.

The protein resides in the cytoplasm. Functionally, catalyzes the GTP-dependent ribosomal translocation step during translation elongation. During this step, the ribosome changes from the pre-translocational (PRE) to the post-translocational (POST) state as the newly formed A-site-bound peptidyl-tRNA and P-site-bound deacylated tRNA move to the P and E sites, respectively. Catalyzes the coordinated movement of the two tRNA molecules, the mRNA and conformational changes in the ribosome. This chain is Elongation factor G, found in Synechococcus sp. (strain CC9902).